We begin with the raw amino-acid sequence, 640 residues long: Sodium-dependent nutrient amino acid transporter 1 (640 aa).

The segment covering 1-13 (MELKPNGNHNNNN) has biased composition (low complexity). Positions 1-25 (MELKPNGNHNNNNAAEKSEDTEKAK) are disordered. Residues 1–30 (MELKPNGNHNNNNAAEKSEDTEKAKAERTN) are Cytoplasmic-facing. A compositionally biased stretch (basic and acidic residues) spans 16-25 (EKSEDTEKAK). Helical transmembrane passes span 31–51 (WGNG…LGNV), 64–84 (GAFL…MYYL), and 117–137 (TICI…YLFV). 3 N-linked (GlcNAc...) asparagine glycosylation sites follow: Asn174, Asn181, and Asn197. A run of 9 helical transmembrane segments spans residues 228–248 (PDWK…LVIM), 257–277 (AAYF…IRAV), 306–326 (AVVQ…MFAS), 340–360 (IVTT…FAIL), 400–420 (LFSV…IVAL), 447–467 (CGFL…LTLV), 473–493 (TYVV…IYGL), 515–535 (CWSF…MVTI), and 551–571 (VAGW…GLWY).

It belongs to the sodium:neurotransmitter symporter (SNF) (TC 2.A.22) family.

It localises to the membrane. Functionally, unusual broad substrate spectrum amino acid:sodium cotransporter that promotes absorption of the D isomers of essential amino acids. Neutral amino acids are the preferred substrates, especially methionine and phenylalanine. The protein is Sodium-dependent nutrient amino acid transporter 1 of Drosophila ananassae (Fruit fly).